Reading from the N-terminus, the 580-residue chain is High affinity choline transporter 1 (580 aa).

Residues 1-6 (MPFHVE) lie on the Extracellular side of the membrane. The helical transmembrane segment at 7–27 (GLVAIILFYLLIFLVGIWAAW) threads the bilayer. The Cytoplasmic portion of the chain corresponds to 28–48 (KTKNSGNAEERSEAIIVGGRD). The helical transmembrane segment at 49–69 (IGLLVGGFTMTATWVGGGYIN) threads the bilayer. Topologically, residues 70–81 (GTAEAVYGPGCG) are extracellular. The helical transmembrane segment at 82–102 (LAWAQAPIGYSLSLILGGLFF) threads the bilayer. Residues 103 to 125 (AKPMRSKGYVTMLDPFQQIYGKR) lie on the Cytoplasmic side of the membrane. A helical transmembrane segment spans residues 126–146 (MGGLLFIPALMGEMFWAAAIF). Residues 147–164 (SALGATISVIIDVDVNIS) are Extracellular-facing. A helical transmembrane segment spans residues 165–185 (VIVSALIAILYTLVGGLYSVA). Topologically, residues 186–191 (YTDVVQ) are cytoplasmic. A helical membrane pass occupies residues 192-212 (LFCIFIGLWISVPFALSHPAV). Topologically, residues 213 to 237 (TDIGFTAVHAKYQSPWLGTIESVEV) are extracellular. Residues 238-258 (YTWLDNFLLLMLGGIPWQAYF) form a helical membrane-spanning segment. The Cytoplasmic portion of the chain corresponds to 259 to 274 (QRVLSSSSATYAQVLS). The chain crosses the membrane as a helical span at residues 275–295 (FLAAFGCLVMALPAICIGAIG). The Extracellular portion of the chain corresponds to 296 to 317 (ASTDWNQTAYGFPDPKTKEEAD). Residue Asn301 is glycosylated (N-linked (GlcNAc...) asparagine). The chain crosses the membrane as a helical span at residues 318 to 338 (MILPIVLQYLCPVYISFFGLG). The Cytoplasmic portion of the chain corresponds to 339–376 (AVSAAVMSSADSSILSASSMFARNIYQLSFRQNASDKE). A helical transmembrane segment spans residues 377–397 (IVWVMRITVFVFGASATAMAL). Topologically, residues 398–406 (LTKTVYGLW) are extracellular. Residues 407–427 (YLSSDLVYIIIFPQLLCVLFI) traverse the membrane as a helical segment. Topologically, residues 428 to 435 (KGTNTYGA) are cytoplasmic. Residues 436–456 (VAGYIFGLFLRITGGEPYLYL) form a helical membrane-spanning segment. Over 457–481 (QPLIFYPGYYPDKNGIYNQRFPFKT) the chain is Extracellular. A helical transmembrane segment spans residues 482–502 (LSMVTSFFTNICVSYLAKYLF). A mediates interaction with SEC14L1 region spans residues 502-580 (FESGTLPPKL…EGSGTEDNLQ (79 aa)). The Cytoplasmic portion of the chain corresponds to 503-580 (ESGTLPPKLD…EGSGTEDNLQ (78 aa)). A Dileucine-like motif motif is present at residues 527–532 (DKTILV).

It belongs to the sodium:solute symporter (SSF) (TC 2.A.21) family. Homooligomerizes at cell surface. Interacts with SEC14L1; may regulate SLC5A7. In terms of processing, phosphorylated. Expressed in basal forebrain, brain stem, spinal chord, and striatum. Specific for cholinergic neurons.

It localises to the presynaptic cell membrane. The protein localises to the cell projection. Its subcellular location is the axon. It is found in the early endosome membrane. The protein resides in the cytoplasmic vesicle. It localises to the secretory vesicle. The protein localises to the synaptic vesicle membrane. It catalyses the reaction choline(out) + n Na(+)(out) = choline(in) + n Na(+)(in). Its activity is regulated as follows. Choline uptake activity is regulated by SLC5A7/CHT1 internalization (inactive form) from the cell surface and recycling of internalized SLC5A7/CHT1 into the cell surface (active form). Activated by extracellular chloride ion. Specifically inhibited by nanomolar concentrations of hemicholinium 3. In terms of biological role, high-affinity Na(+)-coupled choline transmembrane symporter. Functions as an electrogenic, voltage-dependent transporter with variable charge/choline stoichiometry. Choline uptake and choline-induced current is also Cl(-)-dependent where Cl(-) is likely a regulatory ion rather than cotransported ion. Plays a critical role in acetylcholine (ACh) synthesis by taking up the substrate choline from the synaptic cleft into the presynaptic nerve terminals after neurotransmitter release. SLC5A7/CHT1-mediated choline high-affinity transport in cholinergic neurons is the rate-limiting step for production of ACh, thereby facilitating communication by subsequent action potentials. Localized predominantly in presynaptic terminal intracellular organelles, and translocated to the plasma membrane in active form in response to neuronal activity. This Rattus norvegicus (Rat) protein is High affinity choline transporter 1.